The following is a 409-amino-acid chain: Lissencephaly-1 homolog (409 aa).

The 33-residue stretch at 7–39 (QEEELRFAVADYLQSCGYTNALEAFKKDASIPK) folds into the LisH domain. Residues 56–81 (SVVRLQKKVMDLELRLNNTTREMNSG) adopt a coiled-coil conformation. Residues 75–92 (TREMNSGVPTRNSRSSND) are compositionally biased toward polar residues. Residues 75–105 (TREMNSGVPTRNSRSSNDWIPRPPEKHSLSG) are disordered. 7 WD repeats span residues 105-146 (GHRS…RTLR), 147-186 (GHTDSVQDLAFDSSGKLLASSSADMTVKIWDFQTFECRMT), 189-228 (GHDHNVSSVCFLPSGDFLLSSSRDKTIKMWEVATGYCVYN), 231-270 (GHREWVRRVAVASDGSLMASCSNDQTVRIWSLSSKECKEE), 273-332 (GHEH…CLFS), 335-374 (GHDNWVRGLAFHAGGKYLTSASDDKTIKIWELRHKRCSKS), and 377-409 (AHNHFVTTIDFHRSSPFVITGSVDLTIKVWECR).

The protein belongs to the WD repeat LIS1/nudF family.

It localises to the cytoplasm. The protein localises to the cytoskeleton. Its subcellular location is the microtubule organizing center. The protein resides in the centrosome. Functionally, positively regulates the activity of the minus-end directed microtubule motor protein dynein. May enhance dynein-mediated microtubule sliding by targeting dynein to the microtubule plus end. Required for several dynein- and microtubule-dependent processes. This Trichoplax adhaerens (Trichoplax reptans) protein is Lissencephaly-1 homolog.